Reading from the N-terminus, the 392-residue chain is 23S rRNA (uracil(747)-C(5))-methyltransferase RlmC (392 aa).

Positions 4, 12, 15, and 93 each coordinate [4Fe-4S] cluster. S-adenosyl-L-methionine contacts are provided by glutamine 218, phenylalanine 247, glutamate 275, and asparagine 321. Residue cysteine 348 is the Nucleophile of the active site.

The protein belongs to the class I-like SAM-binding methyltransferase superfamily. RNA M5U methyltransferase family. RlmC subfamily.

The catalysed reaction is uridine(747) in 23S rRNA + S-adenosyl-L-methionine = 5-methyluridine(747) in 23S rRNA + S-adenosyl-L-homocysteine + H(+). Functionally, catalyzes the formation of 5-methyl-uridine at position 747 (m5U747) in 23S rRNA. The protein is 23S rRNA (uracil(747)-C(5))-methyltransferase RlmC of Haemophilus influenzae (strain ATCC 51907 / DSM 11121 / KW20 / Rd).